The chain runs to 491 residues: Probable glycine dehydrogenase (decarboxylating) subunit 2 (491 aa).

Lysine 264 carries the N6-(pyridoxal phosphate)lysine modification.

The protein belongs to the GcvP family. C-terminal subunit subfamily. In terms of assembly, the glycine cleavage system is composed of four proteins: P, T, L and H. In this organism, the P 'protein' is a heterodimer of two subunits. Pyridoxal 5'-phosphate serves as cofactor.

It carries out the reaction N(6)-[(R)-lipoyl]-L-lysyl-[glycine-cleavage complex H protein] + glycine + H(+) = N(6)-[(R)-S(8)-aminomethyldihydrolipoyl]-L-lysyl-[glycine-cleavage complex H protein] + CO2. Functionally, the glycine cleavage system catalyzes the degradation of glycine. The P protein binds the alpha-amino group of glycine through its pyridoxal phosphate cofactor; CO(2) is released and the remaining methylamine moiety is then transferred to the lipoamide cofactor of the H protein. This is Probable glycine dehydrogenase (decarboxylating) subunit 2 from Coxiella burnetii (strain CbuG_Q212) (Coxiella burnetii (strain Q212)).